The chain runs to 282 residues: Elongation factor Ts (282 aa).

The involved in Mg(2+) ion dislocation from EF-Tu stretch occupies residues 80 to 83; that stretch reads TDFV.

The protein belongs to the EF-Ts family.

Its subcellular location is the cytoplasm. Its function is as follows. Associates with the EF-Tu.GDP complex and induces the exchange of GDP to GTP. It remains bound to the aminoacyl-tRNA.EF-Tu.GTP complex up to the GTP hydrolysis stage on the ribosome. This chain is Elongation factor Ts (tsf), found in Chlamydia pneumoniae (Chlamydophila pneumoniae).